The chain runs to 373 residues: Nuclear migration protein JNM1 (373 aa).

The interval 33-53 (EVKEDGQQEEQEEASSRKDGL) is disordered. The residue at position 91 (Ser-91) is a Phosphoserine. Coiled-coil stretches lie at residues 114–139 (KIEN…LATE), 200–245 (EDRK…EFEN), and 331–367 (WLKA…EDEA).

In terms of assembly, component of the dynactin complex composed of at least ARP1, JNM1, NIP100 and ARP10. Dynactin comprises a short rod of ARP1 polymers attached to ARP10 at its pointed-end and probably associated with the capping protein at its barbed-end. The rod structure is implicated in dynein cargo binding. A sidearm formed by NIP100 projects from the ARP1 filament and is implicated in motor binding. Interacts with ARP1.

The protein localises to the cytoplasm. It localises to the cytoskeleton. In terms of biological role, component of the dynactin complex which assists cytoplasmic dynein by increasing its processivity and by regulation of its cargo binding. The dynactin complex is required for the spindle translocation late in anaphase and is involved in a cell wall synthesis checkpoint. JNM1 is associated with the rod and links it to the projecting sidearm. Required for proper nuclear migration during the mitotic cell cycle and for astral microtubule development. The protein is Nuclear migration protein JNM1 (JNM1) of Saccharomyces cerevisiae (strain ATCC 204508 / S288c) (Baker's yeast).